The sequence spans 173 residues: Peptide methionine sulfoxide reductase MsrA (173 aa).

Cysteine 10 is an active-site residue.

Belongs to the MsrA Met sulfoxide reductase family.

The catalysed reaction is L-methionyl-[protein] + [thioredoxin]-disulfide + H2O = L-methionyl-(S)-S-oxide-[protein] + [thioredoxin]-dithiol. The enzyme catalyses [thioredoxin]-disulfide + L-methionine + H2O = L-methionine (S)-S-oxide + [thioredoxin]-dithiol. Its function is as follows. Has an important function as a repair enzyme for proteins that have been inactivated by oxidation. Catalyzes the reversible oxidation-reduction of methionine sulfoxide in proteins to methionine. The polypeptide is Peptide methionine sulfoxide reductase MsrA (Psychrobacter cryohalolentis (strain ATCC BAA-1226 / DSM 17306 / VKM B-2378 / K5)).